The primary structure comprises 326 residues: F-box/LRR-repeat protein 12 (326 aa).

The 47-residue stretch at 1–47 (MATLFDLPDLVLLEIFSYLPVRDRIRISRVCHRWKRLVDDRWLWRHV) folds into the F-box domain. 8 LRR repeats span residues 51 to 78 (LYTM…RMGG), 86 to 111 (APQL…CLHV), 113 to 133 (DLSM…ELHS), 161 to 185 (VPAF…VLGG), 186 to 211 (TYRV…EVLG), 212 to 236 (CTLS…IRLT), 237 to 261 (VGGL…CFQG), and 266 to 291 (PDMP…EVQG).

Interacts with SKP1 and CUL1.

The protein operates within protein modification; protein ubiquitination. In terms of biological role, substrate-recognition component of the SCF (SKP1-CUL1-F-box protein)-type E3 ubiquitin ligase complex. Mediates the polyubiquitination and proteasomal degradation of CAMK1 leading to disruption of cyclin D1/CDK4 complex assembly which results in G1 cell cycle arrest in lung epithelia. This chain is F-box/LRR-repeat protein 12 (Fbxl12), found in Mus musculus (Mouse).